A 439-amino-acid chain; its full sequence is tRNA modification GTPase MnmE (439 aa).

Residues R26, E88, and R127 each coordinate (6S)-5-formyl-5,6,7,8-tetrahydrofolate. Residues 220–367 enclose the TrmE-type G domain; sequence GARLALIGRP…LRDAIHTALI (148 aa). N230 contacts K(+). GTP-binding positions include 230 to 235, 249 to 255, and 274 to 277; these read NAGKSS, TPIPGTT, and DTAG. S234 contributes to the Mg(2+) binding site. T249, I251, and T254 together coordinate K(+). T255 serves as a coordination point for Mg(2+). K439 contributes to the (6S)-5-formyl-5,6,7,8-tetrahydrofolate binding site.

This sequence belongs to the TRAFAC class TrmE-Era-EngA-EngB-Septin-like GTPase superfamily. TrmE GTPase family. In terms of assembly, homodimer. Heterotetramer of two MnmE and two MnmG subunits. K(+) is required as a cofactor.

Its subcellular location is the cytoplasm. Its function is as follows. Exhibits a very high intrinsic GTPase hydrolysis rate. Involved in the addition of a carboxymethylaminomethyl (cmnm) group at the wobble position (U34) of certain tRNAs, forming tRNA-cmnm(5)s(2)U34. In Deinococcus geothermalis (strain DSM 11300 / CIP 105573 / AG-3a), this protein is tRNA modification GTPase MnmE.